We begin with the raw amino-acid sequence, 446 residues long: MNALPSTIVAIATAAGTGGIGIVRLSGPQSVQIAAALGIAGLQSRHARYARFRDAQGEVIDDGIAVWFPAPHSFTGEEVVELQGHGSPVLLRQLVARCIALGARQARAGEFSERAFLNGKLDLAQAEAIADLIAAGDLRAARAARRSLDGVFSRRVDAVSESLTRLRIHVEAAIDFADEPLDTLGGAQVREELTRTRALLAQLLRDAERGRKLRDGLHAVLIGPPNAGKSSLLNALAGSDRAIVTDVAGTTRDTLHEAIQLDGFELTLVDTAGLREGGDAIEREGMRRARAELQRADLALIVLDARDPQAARDALGDAIDAVPRRLWIHNKCDLLAVAGPMDADAIAVSAVTGQGLEHLHTRLRELALGDGIESVDGEFSARTRHVDALHRAEQHADAADLELRYEQLELAAEELRLAHEALGEITGKLSADDLLGKIFSSFCIGK.

(6S)-5-formyl-5,6,7,8-tetrahydrofolate-binding residues include Arg24, Glu81, and Lys120. The 153-residue stretch at 216-368 (GLHAVLIGPP…LHTRLRELAL (153 aa)) folds into the TrmE-type G domain. A K(+)-binding site is contributed by Asn226. Residues 226–231 (NAGKSS), 245–251 (TDVAGTT), and 270–273 (DTAG) each bind GTP. Ser230 serves as a coordination point for Mg(2+). K(+) is bound by residues Thr245, Val247, and Thr250. Position 251 (Thr251) interacts with Mg(2+). (6S)-5-formyl-5,6,7,8-tetrahydrofolate is bound at residue Lys446.

The protein belongs to the TRAFAC class TrmE-Era-EngA-EngB-Septin-like GTPase superfamily. TrmE GTPase family. In terms of assembly, homodimer. Heterotetramer of two MnmE and two MnmG subunits. K(+) is required as a cofactor.

The protein localises to the cytoplasm. Functionally, exhibits a very high intrinsic GTPase hydrolysis rate. Involved in the addition of a carboxymethylaminomethyl (cmnm) group at the wobble position (U34) of certain tRNAs, forming tRNA-cmnm(5)s(2)U34. This Xanthomonas campestris pv. campestris (strain 8004) protein is tRNA modification GTPase MnmE.